The following is a 201-amino-acid chain: MSSVPPTIGVLALQGDVREHIHALEQAGARARRIRRPDELDSIDGLILPGGESTTMGRLAAVFGLLTPLRERIAAGLPAYGTCAGMIMLADRLADGAPGQQTIGGIDMTVRRNAFGRQVASFEGTVEMTGVDGGPVEAVFIRAPWVESTGPGVQVLGRISRGDTAGRIVAVRQGRLLATSFHPELTGDTRVHRLFVDMVKG.

Position 51 to 53 (51 to 53 (GES)) interacts with L-glutamine. Catalysis depends on C83, which acts as the Nucleophile. L-glutamine contacts are provided by residues R112 and 141–142 (IR). Active-site charge relay system residues include H182 and E184.

It belongs to the glutaminase PdxT/SNO family. As to quaternary structure, in the presence of PdxS, forms a dodecamer of heterodimers. Only shows activity in the heterodimer.

The enzyme catalyses aldehydo-D-ribose 5-phosphate + D-glyceraldehyde 3-phosphate + L-glutamine = pyridoxal 5'-phosphate + L-glutamate + phosphate + 3 H2O + H(+). It carries out the reaction L-glutamine + H2O = L-glutamate + NH4(+). Its pathway is cofactor biosynthesis; pyridoxal 5'-phosphate biosynthesis. Its function is as follows. Catalyzes the hydrolysis of glutamine to glutamate and ammonia as part of the biosynthesis of pyridoxal 5'-phosphate. The resulting ammonia molecule is channeled to the active site of PdxS. The sequence is that of Pyridoxal 5'-phosphate synthase subunit PdxT from Thermobifida fusca (strain YX).